The sequence spans 457 residues: Vasoactive intestinal polypeptide receptor 1 (457 aa).

The N-terminal stretch at 1-30 (MRPPSPLPARWLCVLAGALAWALGPAGGQA) is a signal peptide. The Extracellular segment spans residues 31–141 (ARLQEECDYV…DEQQTMFYGS (111 aa)). Disulfide bonds link cysteine 37-cysteine 208, cysteine 50-cysteine 72, cysteine 63-cysteine 105, cysteine 86-cysteine 122, and cysteine 215-cysteine 285. Residues asparagine 58, asparagine 69, and asparagine 100 are each glycosylated (N-linked (GlcNAc...) asparagine). Residues 142–166 (VKTGYTIGYGLSLATLLVATAILSL) form a helical membrane-spanning segment. The Cytoplasmic portion of the chain corresponds to 167–174 (FRKLHCTR). A helical membrane pass occupies residues 175–196 (NYIHMHLFISFILRAAAVFIKD). At 197-216 (LALFDSGESDQCSEGSVGCK) the chain is on the extracellular side. Residues 217–241 (AAMVFFQYCVMANFFWLLVEGLYLY) traverse the membrane as a helical segment. The Cytoplasmic portion of the chain corresponds to 242–254 (TLLAVSFFSERKY). Residues 255–276 (FWGYILIGWGVPSTFTMVWTIA) traverse the membrane as a helical segment. Over 277–291 (RIHFEDYGCWDTINS) the chain is Extracellular. N-linked (GlcNAc...) asparagine glycosylation occurs at asparagine 290. Residues 292–316 (SLWWIIKGPILTSILVNFILFICII) form a helical membrane-spanning segment. The Cytoplasmic portion of the chain corresponds to 317–338 (RILLQKLRPPDIRKSDSSPYSR). The helical transmembrane segment at 339–359 (LARSTLLLIPLFGVHYIMFAF) threads the bilayer. The Extracellular portion of the chain corresponds to 360–367 (FPDNFKPE). Residues 368–391 (VKMVFELVVGSFQGFVVAILYCFL) form a helical membrane-spanning segment. Topologically, residues 392–457 (NGEVQAELRR…SSFQAEVSLV (66 aa)) are cytoplasmic.

The protein belongs to the G-protein coupled receptor 2 family. In terms of assembly, interacts with ADCYAP1/PACAP; activated by both PACAP27 and PACAP38 neuropeptides. Interacts with VIP; the interaction results in VIPR1 activation. As to expression, in lung, HT-29 colonic epithelial cells, Raji B-lymphoblasts. Lesser extent in brain, heart, kidney, liver and placenta. Not expressed in CD4+ or CD8+ T-cells. Expressed in the T-cell lines HARRIS, HuT 78, Jurkat and SUP-T1, but not in the T-cell lines Peer, MOLT-4, HSB and YT.

The protein localises to the cell membrane. In terms of biological role, g protein-coupled receptor activated by the neuropeptides vasoactive intestinal peptide (VIP) and pituitary adenylate cyclase-activating polypeptide (ADCYAP1/PACAP). Binds VIP and both PACAP27 and PACAP38 bioactive peptides with the following order of ligand affinity VIP = PACAP27 &gt; PACAP38. Ligand binding causes a conformation change that triggers signaling via guanine nucleotide-binding proteins (G proteins) and modulates the activity of downstream effectors. Activates cAMP-dependent pathway. The protein is Vasoactive intestinal polypeptide receptor 1 of Homo sapiens (Human).